Here is a 61-residue protein sequence, read N- to C-terminus: Large ribosomal subunit protein bL32c (61 aa).

A disordered region spans residues 37 to 61 (SRSFSSGNEHPKPKGFSGQQQQTNK).

This sequence belongs to the bacterial ribosomal protein bL32 family.

The protein resides in the plastid. It is found in the chloroplast. The polypeptide is Large ribosomal subunit protein bL32c (Agrostis stolonifera (Creeping bentgrass)).